Reading from the N-terminus, the 465-residue chain is Glutamate--tRNA ligase (465 aa).

Residues 11-21 carry the 'HIGH' region motif; sequence PSPTGYLHIGG. The 'KMSKS' region signature appears at 243 to 247; it reads KLSKR. Lys-246 contacts ATP.

The protein belongs to the class-I aminoacyl-tRNA synthetase family. Glutamate--tRNA ligase type 1 subfamily. Monomer.

The protein resides in the cytoplasm. The enzyme catalyses tRNA(Glu) + L-glutamate + ATP = L-glutamyl-tRNA(Glu) + AMP + diphosphate. In terms of biological role, catalyzes the attachment of glutamate to tRNA(Glu) in a two-step reaction: glutamate is first activated by ATP to form Glu-AMP and then transferred to the acceptor end of tRNA(Glu). This chain is Glutamate--tRNA ligase, found in Aromatoleum aromaticum (strain DSM 19018 / LMG 30748 / EbN1) (Azoarcus sp. (strain EbN1)).